The primary structure comprises 387 residues: 3-ketoacyl-CoA thiolase (387 aa).

The active-site Acyl-thioester intermediate is the cysteine 91. Residues histidine 343 and cysteine 373 each act as proton acceptor in the active site.

It belongs to the thiolase-like superfamily. Thiolase family. Heterotetramer of two alpha chains (FadB) and two beta chains (FadA).

It localises to the cytoplasm. It carries out the reaction an acyl-CoA + acetyl-CoA = a 3-oxoacyl-CoA + CoA. Its pathway is lipid metabolism; fatty acid beta-oxidation. Catalyzes the final step of fatty acid oxidation in which acetyl-CoA is released and the CoA ester of a fatty acid two carbons shorter is formed. This chain is 3-ketoacyl-CoA thiolase, found in Shewanella sp. (strain W3-18-1).